The chain runs to 405 residues: Na(+)/H(+) antiporter NhaA 1 (405 aa).

The next 11 membrane-spanning stretches (helical) occupy residues 20 to 40 (FVSDASAGILLILVAAAAMIV), 68 to 88 (LHLWINDGLMAIFFFVVGLEV), 105 to 125 (LPVLAAIAGMAVPAIVYVGVV), 134 to 154 (GWAIPAATDIAFAMGVLGLLG), 163 to 183 (LFLLTVAIVDDIGAVLVIAAF), 186 to 206 (ANLKVMWLVIALGIFGVMVGM), 214 to 234 (IWPYILVALVLWVAVLFSGVH), 263 to 283 (GLAPWSAYLVVPIFGFANAGV), 301 to 321 (IAAGLVVGKQLGIFGIIVAAV), 334 to 354 (WIEIWGVSILTGIGFTMSLFI), and 371 to 391 (IGILGGSLISAILGYTILRLT).

Belongs to the NhaA Na(+)/H(+) (TC 2.A.33) antiporter family.

It localises to the cell inner membrane. The catalysed reaction is Na(+)(in) + 2 H(+)(out) = Na(+)(out) + 2 H(+)(in). Functionally, na(+)/H(+) antiporter that extrudes sodium in exchange for external protons. The protein is Na(+)/H(+) antiporter NhaA 1 of Erythrobacter litoralis (strain HTCC2594).